The following is an 86-amino-acid chain: Small ribosomal subunit protein uS15c (86 aa).

The protein belongs to the universal ribosomal protein uS15 family. As to quaternary structure, part of the 30S ribosomal subunit.

The protein resides in the plastid. The polypeptide is Small ribosomal subunit protein uS15c (rps15) (Cuscuta obtusiflora (Peruvian dodder)).